Reading from the N-terminus, the 1103-residue chain is Coatomer subunit beta (1103 aa).

HEAT repeat units lie at residues Glu51–Asp89, Glu94–Lys129, Val130–Leu166, Gln247–Ser284, Arg322–Val359, Val365–Glu404, and Ala405–His441.

As to quaternary structure, oligomeric complex that consists of at least the alpha, beta, beta', gamma, delta, epsilon and zeta subunits.

It localises to the cytoplasm. Its subcellular location is the golgi apparatus membrane. It is found in the cytoplasmic vesicle. The protein localises to the COPI-coated vesicle membrane. Functionally, the coatomer is a cytosolic protein complex that binds to dilysine motifs and reversibly associates with Golgi non-clathrin-coated vesicles, which further mediate biosynthetic protein transport from the ER, via the Golgi up to the trans Golgi network. Coatomer complex is required for budding from Golgi membranes, and is essential for the retrograde Golgi-to-ER transport of dilysine-tagged proteins. This is Coatomer subunit beta from Toxoplasma gondii.